The primary structure comprises 359 residues: Peptide chain release factor 1 (359 aa).

Gln-236 is subject to N5-methylglutamine.

The protein belongs to the prokaryotic/mitochondrial release factor family. Post-translationally, methylated by PrmC. Methylation increases the termination efficiency of RF1.

It is found in the cytoplasm. In terms of biological role, peptide chain release factor 1 directs the termination of translation in response to the peptide chain termination codons UAG and UAA. The polypeptide is Peptide chain release factor 1 (Streptococcus pneumoniae serotype 4 (strain ATCC BAA-334 / TIGR4)).